The following is a 114-amino-acid chain: Pancreatic progenitor cell differentiation and proliferation factor (114 aa).

Residue S9 is modified to Phosphoserine. 2 disordered regions span residues 22–47 (GSTS…PGLP) and 75–114 (AEHS…GPPS). Residues 23–33 (STSSNSSCSST) show a composition bias toward low complexity. The segment covering 102–114 (GGQSSTASAGPPS) has biased composition (polar residues).

The protein belongs to the PPDPF family.

Its function is as follows. Probable regulator of exocrine pancreas development. The polypeptide is Pancreatic progenitor cell differentiation and proliferation factor (PPDPF) (Homo sapiens (Human)).